The chain runs to 464 residues: Isthmin-1 (464 aa).

The N-terminal stretch at 1 to 29 (MVRLAAELLLLLGLLLLTLHITVLRGSGA) is a signal peptide. Residue Asn39 is glycosylated (N-linked (GlcNAc...) asparagine). Disordered stretches follow at residues 50–98 (NVGS…LQRD), 135–155 (PDSE…SVPS), and 173–219 (SGDQ…STDG). Over residues 51 to 63 (VGSDTTSETSFSL) the composition is skewed to polar residues. Composition is skewed to basic and acidic residues over residues 66–76 (EAPREHLDHQA) and 138–147 (EADKDQHPEN). The region spanning 218–262 (DGEGDWSLWSVCSVTCGNGNQKRTRSCGYACTATESRTCDRPNCP) is the TSP type-1 domain. Disulfide bonds link Cys229-Cys256, Cys233-Cys261, and Cys244-Cys248. One can recognise an AMOP domain in the interval 289–452 (LFEVDTDSCE…QKCTESPSDE (164 aa)).

This sequence belongs to the isthmin family. As to quaternary structure, interacts with integrin ITGAV/ITGB5.

It localises to the secreted. Acts as an angiogenesis inhibitor. This chain is Isthmin-1 (ISM1), found in Homo sapiens (Human).